We begin with the raw amino-acid sequence, 61 residues long: Protein translocase subunit SecE (61 aa).

At 1-34 the chain is on the cytoplasmic side; it reads MAELQERIRHFWKESRRAFLVTKKPNWATYKRAA. The chain crosses the membrane as a helical span at residues 35 to 55; the sequence is KITGLGIILIGLIGMLIRIVG. The Extracellular segment spans residues 56 to 61; sequence ILILGG.

Belongs to the SecE/SEC61-gamma family. In terms of assembly, component of the Sec protein translocase complex. Heterotrimer consisting of alpha (SecY), beta (SecG) and gamma (SecE) subunits. The heterotrimers can form oligomers, although 1 heterotrimer is thought to be able to translocate proteins. Interacts with the ribosome. May interact with SecDF, and other proteins may be involved.

The protein localises to the cell membrane. Essential subunit of the protein translocation channel SecYEG. Clamps together the 2 halves of SecY. May contact the channel plug during translocation. The protein is Protein translocase subunit SecE of Pyrococcus furiosus (strain ATCC 43587 / DSM 3638 / JCM 8422 / Vc1).